Consider the following 369-residue polypeptide: Transposase for insertion sequence element IS1201 (369 aa).

It belongs to the transposase mutator family.

Its function is as follows. Required for the transposition of the insertion element. The polypeptide is Transposase for insertion sequence element IS1201 (Lactobacillus helveticus (Lactobacillus suntoryeus)).